Consider the following 216-residue polypeptide: Peptide methionine sulfoxide reductase MsrA (216 aa).

Residue cysteine 58 is part of the active site.

This sequence belongs to the MsrA Met sulfoxide reductase family.

It catalyses the reaction L-methionyl-[protein] + [thioredoxin]-disulfide + H2O = L-methionyl-(S)-S-oxide-[protein] + [thioredoxin]-dithiol. The enzyme catalyses [thioredoxin]-disulfide + L-methionine + H2O = L-methionine (S)-S-oxide + [thioredoxin]-dithiol. Has an important function as a repair enzyme for proteins that have been inactivated by oxidation. Catalyzes the reversible oxidation-reduction of methionine sulfoxide in proteins to methionine. This is Peptide methionine sulfoxide reductase MsrA from Azotobacter vinelandii (strain DJ / ATCC BAA-1303).